A 194-amino-acid polypeptide reads, in one-letter code: dTTP/UTP pyrophosphatase (194 aa).

Residue D73 is the Proton acceptor of the active site.

It belongs to the Maf family. YhdE subfamily. A divalent metal cation is required as a cofactor.

Its subcellular location is the cytoplasm. The enzyme catalyses dTTP + H2O = dTMP + diphosphate + H(+). The catalysed reaction is UTP + H2O = UMP + diphosphate + H(+). Functionally, nucleoside triphosphate pyrophosphatase that hydrolyzes dTTP and UTP. May have a dual role in cell division arrest and in preventing the incorporation of modified nucleotides into cellular nucleic acids. The sequence is that of dTTP/UTP pyrophosphatase from Clostridium botulinum (strain Loch Maree / Type A3).